We begin with the raw amino-acid sequence, 123 residues long: Large ribosomal subunit protein uL29 (123 aa).

At lysine 19 the chain carries N6-acetyllysine. Lysine 25 participates in a covalent cross-link: Glycyl lysine isopeptide (Lys-Gly) (interchain with G-Cter in SUMO2). Phosphoserine is present on serine 29. An N6-acetyllysine modification is found at lysine 43.

It belongs to the universal ribosomal protein uL29 family. Component of the large ribosomal subunit.

The protein localises to the cytoplasm. Component of the large ribosomal subunit. The ribosome is a large ribonucleoprotein complex responsible for the synthesis of proteins in the cell. The chain is Large ribosomal subunit protein uL29 (RPL35) from Sus scrofa (Pig).